We begin with the raw amino-acid sequence, 129 residues long: Lysozyme C-3 (129 aa).

The 129-residue stretch at 1-129 (KVYERCELAA…VSRWIRGCRL (129 aa)) folds into the C-type lysozyme domain. Disulfide bonds link Cys-6/Cys-127, Cys-30/Cys-115, Cys-64/Cys-80, and Cys-76/Cys-94. Active-site residues include Glu-35 and Asp-52.

The protein belongs to the glycosyl hydrolase 22 family.

It localises to the secreted. The enzyme catalyses Hydrolysis of (1-&gt;4)-beta-linkages between N-acetylmuramic acid and N-acetyl-D-glucosamine residues in a peptidoglycan and between N-acetyl-D-glucosamine residues in chitodextrins.. Functionally, lysozymes have primarily a bacteriolytic function; those in tissues and body fluids are associated with the monocyte-macrophage system and enhance the activity of immunoagents. This is Lysozyme C-3 from Anas platyrhynchos (Mallard).